The primary structure comprises 163 residues: Sperm surface protein Sp17 (163 aa).

Disordered stretches follow at residues 57–115 (PAEW…EKEE) and 129–163 (VAREEVKKMKTDSLQNEEKEENSEDTGFTSRTHEK). 2 stretches are compositionally biased toward basic and acidic residues: residues 62 to 98 (SKVEDRFYNNHAFEEQEPPEKSDPKQEESQVSGKEEE) and 129 to 139 (VAREEVKKMKT). Residues 114–143 (EEVAAVKIQAAFRGHVAREEVKKMKTDSLQ) form the IQ domain. A compositionally biased stretch (polar residues) spans 153 to 163 (DTGFTSRTHEK).

In terms of assembly, homodimer. May interact with ROPN1. As to expression, testis- and sperm-specific.

It localises to the membrane. Sperm surface zona pellucida binding protein. Helps to bind spermatozoa to the zona pellucida with high affinity. Might function in binding zona pellucida and carbohydrates. This chain is Sperm surface protein Sp17 (SPA17), found in Papio hamadryas (Hamadryas baboon).